The chain runs to 214 residues: Clavatol biosynthesis cluster protein B (214 aa).

A signal peptide spans 1 to 17; it reads MAALSFQCLCVASAVRA. Residues asparagine 103 and asparagine 204 are each glycosylated (N-linked (GlcNAc...) asparagine).

It functions in the pathway secondary metabolite biosynthesis. In terms of biological role, part of the cla gene cluster that produces clavatol and ortho-quinone methide. The clavatol biosynthesis cluster cla and the terrestric acid cluster tra are both involved in the production of peniphenones and penilactones. The non-reducing PKS claF is responsible for the formation of clavatol from successive condensations of 3 malonyl-CoA units, presumably with a simple acetyl-CoA starter unit, and 2 methylation steps. The esterase claE probably collaborates with claF by catalyzing the hydrolysis of ACP-bound acyl intermediates to free the ACP from stalled intermediates. The clavatol oxidase claD then converts clavatol to hydroxyclavatol. Spontaneous dehydration of hydroxyclavatol leads to the accumulation of the highly active ortho-quinone methide. On the other hand, the PKS-NRPS hybrid traA is involved in the formation of crustosic acid, with the help of traB and traD. The polyketide synthase module (PKS) of traA is responsible for the synthesis of the polyketide backbone via the condensation of an acetyl-CoA starter unit with 3 malonyl-CoA units. The downstream nonribosomal peptide synthetase (NRPS) module then amidates the carboxyl end of the polyketide with L-malic acid. Because traA lacks a designated enoylreductase (ER) domain, the required activity is provided the enoyl reductase traG. Crustosic acid undergoes decarboxylation and isomerization to the terrestric acid, catalyzed by the 2-oxoglutarate-dependent dioxygenase traH. Both acids are further converted to the 2 gamma-butyrolactones (R)-5-methyltetronic acid and (S)-5-carboxylmethyltetronic acid, with involvement of the cytochrome P450 monooxygenase claJ. Spontaneous addition of the methide to these gamma-butyrolactones leads to peniphenone D and penilactone D, which undergo again stereospecific attacking by methide to give penilactones A and B. The function of claB has not been investigated yet. This chain is Clavatol biosynthesis cluster protein B, found in Penicillium crustosum (Blue mold fungus).